The following is a 117-amino-acid chain: Iron-sulfur cluster insertion protein ErpA (117 aa).

3 residues coordinate iron-sulfur cluster: Cys45, Cys109, and Cys111.

Belongs to the HesB/IscA family. As to quaternary structure, homodimer. It depends on iron-sulfur cluster as a cofactor.

In terms of biological role, required for insertion of 4Fe-4S clusters for at least IspG. The protein is Iron-sulfur cluster insertion protein ErpA of Ruthia magnifica subsp. Calyptogena magnifica.